The chain runs to 262 residues: Small ribosomal subunit protein uS2 (262 aa).

Residues 224–246 are disordered; it reads GNQGEDQDDAQEQQVAADKKADS.

It belongs to the universal ribosomal protein uS2 family.

The polypeptide is Small ribosomal subunit protein uS2 (Lacticaseibacillus casei (strain BL23) (Lactobacillus casei)).